The chain runs to 415 residues: Adenylosuccinate synthetase (415 aa).

GTP is bound by residues 12-18 and 40-42; these read GDEGKGK and GHT. Asp-13 functions as the Proton acceptor in the catalytic mechanism. Mg(2+) is bound by residues Asp-13 and Gly-40. IMP contacts are provided by residues 13-16, 38-41, Thr-125, Arg-139, Gln-219, Thr-234, and Arg-298; these read DEGK and NAGH. Catalysis depends on His-41, which acts as the Proton donor. 294 to 300 contacts substrate; it reads TTTGRPR. Residues Arg-300, 326 to 328, and 404 to 406 each bind GTP; these read KLD and STG.

Belongs to the adenylosuccinate synthetase family. In terms of assembly, homodimer. Requires Mg(2+) as cofactor.

Its subcellular location is the cytoplasm. The enzyme catalyses IMP + L-aspartate + GTP = N(6)-(1,2-dicarboxyethyl)-AMP + GDP + phosphate + 2 H(+). Its pathway is purine metabolism; AMP biosynthesis via de novo pathway; AMP from IMP: step 1/2. Its function is as follows. Plays an important role in the de novo pathway of purine nucleotide biosynthesis. Catalyzes the first committed step in the biosynthesis of AMP from IMP. The protein is Adenylosuccinate synthetase of Wolinella succinogenes (strain ATCC 29543 / DSM 1740 / CCUG 13145 / JCM 31913 / LMG 7466 / NCTC 11488 / FDC 602W) (Vibrio succinogenes).